The following is a 397-amino-acid chain: Elongation factor Tu (397 aa).

Residues 10–206 (KPHVNIGTIG…AVDTYIPTPE (197 aa)) form the tr-type G domain. The interval 19 to 26 (GHVDHGKT) is G1. 19 to 26 (GHVDHGKT) serves as a coordination point for GTP. Residue threonine 26 participates in Mg(2+) binding. The G2 stretch occupies residues 60-64 (GITIN). Residues 81-84 (DCPG) are G3. Residues 81 to 85 (DCPGH) and 136 to 139 (NKSD) each bind GTP. Residues 136-139 (NKSD) form a G4 region. Residues 174 to 176 (SAL) form a G5 region.

This sequence belongs to the TRAFAC class translation factor GTPase superfamily. Classic translation factor GTPase family. EF-Tu/EF-1A subfamily. In terms of assembly, monomer.

It is found in the cytoplasm. The enzyme catalyses GTP + H2O = GDP + phosphate + H(+). In terms of biological role, GTP hydrolase that promotes the GTP-dependent binding of aminoacyl-tRNA to the A-site of ribosomes during protein biosynthesis. This chain is Elongation factor Tu, found in Clostridium kluyveri (strain ATCC 8527 / DSM 555 / NBRC 12016 / NCIMB 10680 / K1).